Consider the following 102-residue polypeptide: Putative septation protein SpoVG 2 (102 aa).

Belongs to the SpoVG family.

In terms of biological role, could be involved in septation. The sequence is that of Putative septation protein SpoVG 2 from Listeria innocua serovar 6a (strain ATCC BAA-680 / CLIP 11262).